A 1256-amino-acid polypeptide reads, in one-letter code: Topoisomerase 1-associated factor 1 (1256 aa).

The span at 26–38 shows a compositional bias: acidic residues; the sequence is GFIVSDEENDNLE. 4 disordered regions span residues 26–58, 695–725, 1052–1121, and 1176–1256; these read GFIV…VDEY, SKKK…RTHA, SGAE…EAFF, and SDGV…DEDE. Positions 39–53 are enriched in basic and acidic residues; it reads NENRNERDPDSRNQD. A compositionally biased stretch (basic residues) spans 1060 to 1086; that stretch reads GKARKRGNKSSSTIKKKSLQSRSRRPP. Composition is skewed to basic and acidic residues over residues 1097 to 1110 and 1179 to 1190; these read ELRK…FVHD and VDTHSHQDDKSQ. Acidic residues predominate over residues 1194–1204; that stretch reads SENEDSSEEVS. Residues 1222 to 1231 show a composition bias toward low complexity; sequence DNNVSENYVS.

It belongs to the timeless family. As to quaternary structure, component of the fork protection complex (FPC) consisting of TOF1 and CSM3.

The protein localises to the nucleus. Functionally, forms a fork protection complex (FPC) with CSM3 and which is required for chromosome segregation during meiosis and DNA damage repair. FPC coordinates leading and lagging strand synthesis and moves with the replication fork. FPC stabilizes replication forks in a configuration that is recognized by replication checkpoint sensors. This Scheffersomyces stipitis (strain ATCC 58785 / CBS 6054 / NBRC 10063 / NRRL Y-11545) (Yeast) protein is Topoisomerase 1-associated factor 1 (TOF1).